The chain runs to 546 residues: Chaperonin GroEL 2 (546 aa).

ATP is bound by residues 30–33, K51, 87–91, G415, 479–481, and D495; these read TLGP, DGTTT, and NAA. Positions 524-546 are disordered; it reads APKDAPPAAPAGVPGAGGPGFDF. Over residues 537-546 the composition is skewed to gly residues; it reads PGAGGPGFDF.

This sequence belongs to the chaperonin (HSP60) family. Forms a cylinder of 14 subunits composed of two heptameric rings stacked back-to-back. Interacts with the co-chaperonin GroES.

It is found in the cytoplasm. It carries out the reaction ATP + H2O + a folded polypeptide = ADP + phosphate + an unfolded polypeptide.. Together with its co-chaperonin GroES, plays an essential role in assisting protein folding. The GroEL-GroES system forms a nano-cage that allows encapsulation of the non-native substrate proteins and provides a physical environment optimized to promote and accelerate protein folding. The protein is Chaperonin GroEL 2 of Burkholderia pseudomallei (strain 1710b).